The primary structure comprises 340 residues: Ketol-acid reductoisomerase (NADP(+)) (340 aa).

Residues 3–183 form the KARI N-terminal Rossmann domain; it reads VNIYYDKDCD…GGGRTGIIET (181 aa). Residues 26 to 29, S54, and 84 to 87 each bind NADP(+); these read FGSQ and DELQ. H109 is a catalytic residue. G135 serves as a coordination point for NADP(+). Residues 184–329 enclose the KARI C-terminal knotted domain; sequence TFKDETETDL…KKLRAMMPWI (146 aa). Residues D192, E196, E228, and E232 each coordinate Mg(2+). Residue S253 participates in substrate binding.

The protein belongs to the ketol-acid reductoisomerase family. Mg(2+) serves as cofactor.

The catalysed reaction is (2R)-2,3-dihydroxy-3-methylbutanoate + NADP(+) = (2S)-2-acetolactate + NADPH + H(+). It carries out the reaction (2R,3R)-2,3-dihydroxy-3-methylpentanoate + NADP(+) = (S)-2-ethyl-2-hydroxy-3-oxobutanoate + NADPH + H(+). It functions in the pathway amino-acid biosynthesis; L-isoleucine biosynthesis; L-isoleucine from 2-oxobutanoate: step 2/4. It participates in amino-acid biosynthesis; L-valine biosynthesis; L-valine from pyruvate: step 2/4. Its function is as follows. Involved in the biosynthesis of branched-chain amino acids (BCAA). Catalyzes an alkyl-migration followed by a ketol-acid reduction of (S)-2-acetolactate (S2AL) to yield (R)-2,3-dihydroxy-isovalerate. In the isomerase reaction, S2AL is rearranged via a Mg-dependent methyl migration to produce 3-hydroxy-3-methyl-2-ketobutyrate (HMKB). In the reductase reaction, this 2-ketoacid undergoes a metal-dependent reduction by NADPH to yield (R)-2,3-dihydroxy-isovalerate. This is Ketol-acid reductoisomerase (NADP(+)) from Campylobacter curvus (strain 525.92).